A 469-amino-acid chain; its full sequence is Tubulin gamma chain (469 aa).

A GTP-binding site is contributed by 142–148 (AGGTGSG).

It belongs to the tubulin family.

It localises to the cytoplasm. It is found in the cytoskeleton. The protein resides in the microtubule organizing center. Its subcellular location is the spindle pole body. Functionally, tubulin is the major constituent of microtubules. The gamma chain is found at microtubule organizing centers (MTOC) such as the spindle poles or the centrosome, suggesting that it is involved in the minus-end nucleation of microtubule assembly. This Microbotryum violaceum (Anther smut fungus) protein is Tubulin gamma chain (TUB4).